The following is a 186-amino-acid chain: Adenine phosphoribosyltransferase (186 aa).

Belongs to the purine/pyrimidine phosphoribosyltransferase family. Homodimer.

The protein localises to the cytoplasm. The catalysed reaction is AMP + diphosphate = 5-phospho-alpha-D-ribose 1-diphosphate + adenine. Its pathway is purine metabolism; AMP biosynthesis via salvage pathway; AMP from adenine: step 1/1. Its function is as follows. Catalyzes a salvage reaction resulting in the formation of AMP, that is energically less costly than de novo synthesis. This is Adenine phosphoribosyltransferase from Xanthomonas axonopodis pv. citri (strain 306).